A 1302-amino-acid chain; its full sequence is Multidrug resistance protein homolog 65 (1302 aa).

The segment at 1-23 is disordered; the sequence is MERDEVSTSSSEGKSQEEAPMAE. Residues 1–48 are Cytoplasmic-facing; that stretch reads MERDEVSTSSSEGKSQEEAPMAEGLEPTEPIAFLKLFRFSTYGEIGWL. Residues 48–369 enclose the ABC transmembrane type-1 1 domain; sequence LFFGFIMCCI…TAPFLESFAT (322 aa). The chain crosses the membrane as a helical span at residues 49-69; sequence FFGFIMCCIKALTLPAVVIIY. Topologically, residues 70–118 are extracellular; that stretch reads SEFTSMLVDRAMQFGTSSNVHALPLFGGGKTLTNASREENNEALYDDSI. N-linked (GlcNAc...) asparagine glycosylation occurs at asparagine 103. A helical membrane pass occupies residues 119 to 147; sequence SYGILLTIASVVMFISGIFSVDVFNMVAL. The Cytoplasmic segment spans residues 148-194; it reads RQVTRMRIKLFSSVIRQDIGWHDLASKQNFTQSMVDDVEKIRDGISE. A helical membrane pass occupies residues 195–215; sequence KVGHFVYLVVGFIITVAISFS. Over 216 to 223 the chain is Extracellular; that stretch reads YGWKLTLA. The chain crosses the membrane as a helical span at residues 224–242; it reads VSSYIPLVILLNYYVAKFQ. Residues 243 to 302 are Cytoplasmic-facing; the sequence is GKLTAREQESYAGAGNLAEEILSSIRTVVSFGGEKSEVQRYENFLVPARKASQWKGAFSG. The chain crosses the membrane as a helical span at residues 303-323; sequence LSDAVLKSMLYLSCAGAFWYG. At 324-341 the chain is on the extracellular side; it reads VNLIIDDRNVENKEYTPA. The chain crosses the membrane as a helical span at residues 342-362; the sequence is ILMIAFFGIIVGADNIARTAP. The Cytoplasmic segment spans residues 363 to 731; the sequence is FLESFATARG…LQLAKQEWCY (369 aa). Positions 405-641 constitute an ABC transporter 1 domain; the sequence is VEFQDVFFRY…EGAYYNMVRA (237 aa). 440 to 447 is a binding site for ATP; sequence GSSGCGKS. A helical transmembrane segment spans residues 732–753; sequence LILGTISAVAVGFLYPAFAVIF. The region spanning 732 to 1020 is the ABC transmembrane type-1 2 domain; that stretch reads LILGTISAVA…SLAFTPAFSA (289 aa). The Extracellular portion of the chain corresponds to 754 to 776; it reads GEFYAALAEKDPEDALRRTAVLS. A helical membrane pass occupies residues 777-798; the sequence is WACLGLAFLTGLVCFLQTYLFN. Residues 799–852 lie on the Cytoplasmic side of the membrane; sequence YAGIWLTTRMRAMTFNAMVNQEVGWFDDENNSVGALSARLSGEAVDIQGAIGYP. The helical transmembrane segment at 853 to 873 threads the bilayer; the sequence is LSGMIQALSNFISSVSVAMYY. A topological domain (extracellular) is located at residue asparagine 874. The chain crosses the membrane as a helical span at residues 875 to 894; it reads WKLALLCLANCPIIVGSVIL. Over 895 to 956 the chain is Cytoplasmic; the sequence is EAKMMSNAVV…VEVLIRQKLR (62 aa). Residues 957–977 traverse the membrane as a helical segment; it reads WRGVLNSTMQASAFFAYAVAL. Residues 978–993 lie on the Extracellular side of the membrane; sequence CYGGVLVSEGQLPFQD. A helical transmembrane segment spans residues 994–1014; that stretch reads IIKVSETLLYGSMMLAQSLAF. At 1015-1302 the chain is on the cytoplasmic side; sequence TPAFSAALIA…AKLHKTQKDH (288 aa). Residues 1059–1298 enclose the ABC transporter 2 domain; the sequence is VRYRGIQFRY…GGIYAKLHKT (240 aa). 1094-1101 is a binding site for ATP; that stretch reads GHSGCGKS.

It belongs to the ABC transporter superfamily. ABCB family. Multidrug resistance exporter (TC 3.A.1.201) subfamily.

It localises to the membrane. The catalysed reaction is ATP + H2O + xenobioticSide 1 = ADP + phosphate + xenobioticSide 2.. The sequence is that of Multidrug resistance protein homolog 65 (Mdr65) from Drosophila melanogaster (Fruit fly).